A 429-amino-acid polypeptide reads, in one-letter code: TNFAIP3-interacting protein 2 (429 aa).

Position 7 is a phosphoserine (serine 7). The stretch at 29-117 (QRLRRLQDQL…MQQLLSQPQH (89 aa)) forms a coiled coil. Residues 177 to 195 (HAQRNVGERSPDQSEHTDG) are compositionally biased toward basic and acidic residues. The interval 177–199 (HAQRNVGERSPDQSEHTDGHTSV) is disordered. Coiled coils occupy residues 196-226 (HTSV…LNAK) and 255-340 (ELMR…QVSW). The interval 289–347 (RDAALERVQMLEQQILAYKDDFMSERADRERAQSRIQELEEKVASLLHQVSWRQDSREP) is ubiquitin-binding domain (UBD). A disordered region spans residues 372 to 400 (PGGWRPGTGSQQPEPPAEGGHPGAAQRGQ). Residues 388–397 (AEGGHPGAAQ) show a composition bias toward low complexity. The segment at 397-429 (QRGQGDLQCPHCLQCFSDEQGEELLRHVAECCQ) adopts a CCHC NOA-type zinc-finger fold. Zn(2+) is bound by residues cysteine 405, cysteine 408, histidine 423, and cysteine 427.

As to quaternary structure, interacts with STK11/LKB1, TNFAIP3, IKBKG, NFKB1, MAP3K8, TEK, RIPK1, CHUK, IKBKB and SMARCD1. Interacts with polyubiquitin. In terms of assembly, (Microbial infection) Interacts with severe fever with thrombocytopenia syndrome virus (SFTSV) NSs; this interaction promotes TPL2 complex formation and signaling activity leading to IL-10 production. Post-translationally, in vitro phosphorylated by CHUK. In terms of processing, ubiquitinated; undergoes 'Lys-48'-linked polyubiquitination probably leading to constitutive proteasomal degradation which can be impaired by IKK-A/CHUK or IKBKB probably involving deubiquitination. Deubiquitinated by USP35; leading to stabilization and inhibition of TNFalpha-induced NF-kappa-B activation. In terms of tissue distribution, ubiquitously expressed in all tissues examined.

The protein localises to the cytoplasm. It is found in the nucleus. Functionally, inhibits NF-kappa-B activation by blocking the interaction of RIPK1 with its downstream effector NEMO/IKBKG. Forms a ternary complex with NFKB1 and MAP3K8 but appears to function upstream of MAP3K8 in the TLR4 signaling pathway that regulates MAP3K8 activation. Involved in activation of the MEK/ERK signaling pathway during innate immune response; this function seems to be stimulus- and cell type specific. Required for stability of MAP3K8. Involved in regulation of apoptosis in endothelial cells; promotes TEK agonist-stimulated endothelial survival. May act as transcriptional coactivator when translocated to the nucleus. Enhances CHUK-mediated NF-kappa-B activation involving NF-kappa-B p50-p65 and p50-c-Rel complexes. In Homo sapiens (Human), this protein is TNFAIP3-interacting protein 2.